A 346-amino-acid chain; its full sequence is tRNA N6-adenosine threonylcarbamoyltransferase (346 aa).

Residues His111 and His115 each coordinate Fe cation. Residues 134–138 (LVSGG), Asp167, Gly180, and Asn277 contribute to the substrate site. A Fe cation-binding site is contributed by Asp305.

It belongs to the KAE1 / TsaD family. Requires Fe(2+) as cofactor.

The protein localises to the cytoplasm. It carries out the reaction L-threonylcarbamoyladenylate + adenosine(37) in tRNA = N(6)-L-threonylcarbamoyladenosine(37) in tRNA + AMP + H(+). Its function is as follows. Required for the formation of a threonylcarbamoyl group on adenosine at position 37 (t(6)A37) in tRNAs that read codons beginning with adenine. Is involved in the transfer of the threonylcarbamoyl moiety of threonylcarbamoyl-AMP (TC-AMP) to the N6 group of A37, together with TsaE and TsaB. TsaD likely plays a direct catalytic role in this reaction. This chain is tRNA N6-adenosine threonylcarbamoyltransferase, found in Bordetella bronchiseptica (strain ATCC BAA-588 / NCTC 13252 / RB50) (Alcaligenes bronchisepticus).